A 205-amino-acid chain; its full sequence is Guanylate kinase (205 aa).

A Guanylate kinase-like domain is found at Gly-3–Ile-183. Gly-10–Ser-17 contributes to the ATP binding site.

The protein belongs to the guanylate kinase family.

The protein resides in the cytoplasm. The enzyme catalyses GMP + ATP = GDP + ADP. In terms of biological role, essential for recycling GMP and indirectly, cGMP. This Campylobacter jejuni (strain RM1221) protein is Guanylate kinase.